The chain runs to 324 residues: Probable pectinesterase A (324 aa).

The signal sequence occupies residues 1–19 (MHGSLLKLALLSFSLGSSA). Glutamine 142 provides a ligand contact to substrate. The active-site Proton donor is aspartate 165. The active-site Nucleophile is the aspartate 186. Substrate contacts are provided by arginine 246 and tryptophan 248. An N-linked (GlcNAc...) asparagine glycan is attached at asparagine 285.

Belongs to the pectinesterase family.

It is found in the secreted. It catalyses the reaction [(1-&gt;4)-alpha-D-galacturonosyl methyl ester](n) + n H2O = [(1-&gt;4)-alpha-D-galacturonosyl](n) + n methanol + n H(+). The protein operates within glycan metabolism; pectin degradation; 2-dehydro-3-deoxy-D-gluconate from pectin: step 1/5. In terms of biological role, involved in maceration and soft-rotting of plant tissue. In Aspergillus oryzae (strain ATCC 42149 / RIB 40) (Yellow koji mold), this protein is Probable pectinesterase A (pmeA).